A 653-amino-acid polypeptide reads, in one-letter code: Polyadenylate-binding protein, cytoplasmic and nuclear (653 aa).

Positions 1-10 (MPSTDLKKQA) are enriched in basic and acidic residues. A disordered region spans residues 1–77 (MPSTDLKKQA…SVATPSGTAP (77 aa)). Residues 17–27 (DVNTNNEAVES) are compositionally biased toward polar residues. Residues 53-68 (AAEPSESTSTPTNASS) show a composition bias toward low complexity. Residues 80–158 (ASLYVGELDP…RPCRIMWSQR (79 aa)) form the RRM 1 domain. Residue threonine 167 is modified to Phosphothreonine. RRM domains follow at residues 168–245 (GNVF…HHVS), 261–338 (TNVY…RAQK), and 364–441 (VNLF…LAQR). One can recognise a PABC domain in the interval 569 to 646 (PERFTAADLA…AIGVLQEFVD (78 aa)).

Belongs to the polyadenylate-binding protein type-1 family. Interacts with cid13.

The protein localises to the cytoplasm. Its subcellular location is the nucleus. Functionally, binds the poly(A) tail of mRNA. Appears to be an important mediator of the multiple roles of the poly(A) tail in mRNA biogenesis, stability and translation. In the nucleus, involved in both mRNA cleavage and polyadenylation. Is also required for efficient mRNA export to the cytoplasm. Acts in concert with a poly(A)-specific nuclease (PAN) to affect poly(A) tail shortening, which may occur concomitantly with either nucleocytoplasmic mRNA transport or translational initiation. In the cytoplasm, stimulates translation initiation and regulates mRNA decay through translation termination-coupled poly(A) shortening, probably mediated by PAN. The protein is Polyadenylate-binding protein, cytoplasmic and nuclear (pab1) of Schizosaccharomyces pombe (strain 972 / ATCC 24843) (Fission yeast).